The following is a 227-amino-acid chain: UPF0758 protein LPC_1989 (227 aa).

The MPN domain occupies 102 to 225 (QLSNTQQTYA…YSIFAENKWV (124 aa)). Zn(2+) is bound by residues His173, His175, and Asp186. The short motif at 173–186 (HNHPSGLSDASQQD) is the JAMM motif element.

It belongs to the UPF0758 family.

The sequence is that of UPF0758 protein LPC_1989 from Legionella pneumophila (strain Corby).